Reading from the N-terminus, the 282-residue chain is Pantothenate synthetase (282 aa).

Residue 26–33 (MGNLHEGH) coordinates ATP. Catalysis depends on histidine 33, which acts as the Proton donor. Glutamine 57 serves as a coordination point for (R)-pantoate. Residue glutamine 57 coordinates beta-alanine. 148–151 (GKKD) contacts ATP. Residue glutamine 154 coordinates (R)-pantoate. An ATP-binding site is contributed by 185-188 (LSSR).

This sequence belongs to the pantothenate synthetase family. Homodimer.

The protein localises to the cytoplasm. It catalyses the reaction (R)-pantoate + beta-alanine + ATP = (R)-pantothenate + AMP + diphosphate + H(+). It functions in the pathway cofactor biosynthesis; (R)-pantothenate biosynthesis; (R)-pantothenate from (R)-pantoate and beta-alanine: step 1/1. Functionally, catalyzes the condensation of pantoate with beta-alanine in an ATP-dependent reaction via a pantoyl-adenylate intermediate. The chain is Pantothenate synthetase from Paracidovorax citrulli (strain AAC00-1) (Acidovorax citrulli).